The sequence spans 386 residues: Galactokinase (386 aa).

Substrate is bound at residue 35–38; the sequence is EHTD. Residues S69 and 125 to 131 contribute to the ATP site; that span reads GAGLSSS. Residues S131 and E163 each coordinate Mg(2+). Catalysis depends on D175, which acts as the Proton acceptor. Y224 is a substrate binding site.

The protein belongs to the GHMP kinase family. GalK subfamily.

The protein localises to the cytoplasm. It carries out the reaction alpha-D-galactose + ATP = alpha-D-galactose 1-phosphate + ADP + H(+). It participates in carbohydrate metabolism; galactose metabolism. In terms of biological role, catalyzes the transfer of the gamma-phosphate of ATP to D-galactose to form alpha-D-galactose-1-phosphate (Gal-1-P). This Vibrio parahaemolyticus serotype O3:K6 (strain RIMD 2210633) protein is Galactokinase.